The sequence spans 954 residues: Protein translocase subunit SecA (954 aa).

ATP is bound by residues glutamine 86, 104–108 (GEGKT), and aspartate 494. A disordered region spans residues 520–549 (LDPDNPLGSASTTSRGGGQGFGPASPKPKK).

It belongs to the SecA family. In terms of assembly, monomer and homodimer. Part of the essential Sec protein translocation apparatus which comprises SecA, SecYEG and auxiliary proteins SecDF. Other proteins may also be involved.

The protein localises to the cell inner membrane. It localises to the cellular thylakoid membrane. The protein resides in the cytoplasm. It catalyses the reaction ATP + H2O + cellular proteinSide 1 = ADP + phosphate + cellular proteinSide 2.. In terms of biological role, part of the Sec protein translocase complex. Interacts with the SecYEG preprotein conducting channel. Has a central role in coupling the hydrolysis of ATP to the transfer of proteins into and across the cell membrane, serving as an ATP-driven molecular motor driving the stepwise translocation of polypeptide chains across the membrane. Functionally, probably participates in protein translocation into and across both the cytoplasmic and thylakoid membranes in cyanobacterial cells. The polypeptide is Protein translocase subunit SecA (Synechococcus sp. (strain JA-3-3Ab) (Cyanobacteria bacterium Yellowstone A-Prime)).